The following is a 117-amino-acid chain: Large ribosomal subunit protein uL18 (117 aa).

It belongs to the universal ribosomal protein uL18 family. As to quaternary structure, part of the 50S ribosomal subunit; part of the 5S rRNA/L5/L18/L25 subcomplex. Contacts the 5S and 23S rRNAs.

This is one of the proteins that bind and probably mediate the attachment of the 5S RNA into the large ribosomal subunit, where it forms part of the central protuberance. In Leuconostoc citreum (strain KM20), this protein is Large ribosomal subunit protein uL18.